Consider the following 606-residue polypeptide: Retrovirus-related Pol polyprotein from type-1 retrotransposable element R2 (606 aa).

The Reverse transcriptase domain occupies 1–208 (GTLANIIMLE…NTFKYLGLTF (208 aa)). Residues 331–606 (IFNIEGPARS…PPDPPRPVPP (276 aa)) form a nucleic acid-binding endonuclease region.

The catalysed reaction is DNA(n) + a 2'-deoxyribonucleoside 5'-triphosphate = DNA(n+1) + diphosphate. This chain is Retrovirus-related Pol polyprotein from type-1 retrotransposable element R2, found in Popillia japonica (Japanese beetle).